A 388-amino-acid polypeptide reads, in one-letter code: Pepsin A-2/A-3 (388 aa).

Residues 1-15 (MKWLLLLGLVALSEC) form the signal peptide. 2 consecutive propeptides (activation peptide) follow at residues 16–40 (IIHK…LLKD) and 41–62 (FLKK…APTL). One can recognise a Peptidase A1 domain in the interval 76-385 (YFGTIGIGTP…DRANNQVGLA (310 aa)). Residue Asp94 is part of the active site. A disulfide bond links Cys107 and Cys112. At Ser130 the chain carries Phosphoserine. Cys268 and Cys272 are joined by a disulfide. Asp277 is a catalytic residue. A disulfide bridge connects residues Cys311 and Cys344.

This sequence belongs to the peptidase A1 family. Pepsin A-2 is phosphorylated, but not pepsin A-3. In terms of processing, each pepsinogen is converted to corresponding pepsin at pH 2.0 in part as a result of the release of a 47 AA activation segment and in part as a result of stepwise proteolytic cleavage via an intermediate form(s).

The protein resides in the secreted. The catalysed reaction is Preferential cleavage: hydrophobic, preferably aromatic, residues in P1 and P1' positions. Cleaves 1-Phe-|-Val-2, 4-Gln-|-His-5, 13-Glu-|-Ala-14, 14-Ala-|-Leu-15, 15-Leu-|-Tyr-16, 16-Tyr-|-Leu-17, 23-Gly-|-Phe-24, 24-Phe-|-Phe-25 and 25-Phe-|-Tyr-26 bonds in the B chain of insulin.. Functionally, shows particularly broad specificity; although bonds involving phenylalanine and leucine are preferred, many others are also cleaved to some extent. This Macaca fuscata fuscata (Japanese macaque) protein is Pepsin A-2/A-3.